We begin with the raw amino-acid sequence, 621 residues long: MTQEKKKFDAEVGKILNLMIHSLYSNKEIFMRELISNASDACDKLRYLSQSNSELISGDSNFKIIVKVDKDNEQIIIRDNGIGMNKEDLIENLGTIARSGTANFLKNLSGDSKKDNMLIGQFGVGFYSSFMVADKVTVTSRKAGENKVYTWESDGLGEYIVADSEQEFARGTEIVLYIKKAETTFLDHFRLKHIVKSYSDHIAVPIYFCDEASNNEIQLNSASALWTRPKSEITEEQYKEFYKSLSYSVDDPWVTLHNKNEGAIEFTNLLFIPSSKTFDLFHPDRKRRVKLYIKRVFISDENIDLIPSYLRFLRGVVDSEDLPLNISRESLQHNNVLEKIKNAITKRVLGELRKKKEELPEEYNKFWTNFGGALKEGLCEATTDHEKLLEVCIFRSALHNKMISIDEYIANFKEGQNTIYYLSGDNPDKLLSSPQIEGLLNKNIDVLLFTDTVDDFWVNVNSEYKGYAIKSATRSDIDVEHTTSRPQDKNTDSKKSDDEYKLLTDYFKEILGELVKEVKISKKLTLSPACLAVSDTAMDIRMERFLIEQKQIASASAKNLELNPKNKIIEKIFNDLKANNKNNEELVNLIFDQACILEGEPIADTGAFSKRLNDILQKAIL.

The a; substrate-binding stretch occupies residues 1–328 (MTQEKKKFDA…SEDLPLNISR (328 aa)). The interval 329–544 (ESLQHNNVLE…DTAMDIRMER (216 aa)) is b. Residues 545–621 (FLIEQKQIAS…LNDILQKAIL (77 aa)) form a c region.

Belongs to the heat shock protein 90 family. Homodimer.

It localises to the cytoplasm. Its function is as follows. Molecular chaperone. Has ATPase activity. This Rickettsia typhi (strain ATCC VR-144 / Wilmington) protein is Chaperone protein HtpG.